Reading from the N-terminus, the 278-residue chain is Putative B3 domain-containing protein At2g21920 (278 aa).

Positions 168-275 (ISKTLSRTDV…KFIILNFEYN (108 aa)) form a DNA-binding region, TF-B3.

The protein resides in the nucleus. The sequence is that of Putative B3 domain-containing protein At2g21920 from Arabidopsis thaliana (Mouse-ear cress).